A 165-amino-acid polypeptide reads, in one-letter code: Large ribosomal subunit protein uL10 (165 aa).

Belongs to the universal ribosomal protein uL10 family. As to quaternary structure, part of the ribosomal stalk of the 50S ribosomal subunit. The N-terminus interacts with L11 and the large rRNA to form the base of the stalk. The C-terminus forms an elongated spine to which L12 dimers bind in a sequential fashion forming a multimeric L10(L12)X complex.

In terms of biological role, forms part of the ribosomal stalk, playing a central role in the interaction of the ribosome with GTP-bound translation factors. This chain is Large ribosomal subunit protein uL10, found in Pectobacterium carotovorum subsp. carotovorum (strain PC1).